The following is a 541-amino-acid chain: Chaperonin GroEL, cyanelle (541 aa).

ATP-binding positions include 29 to 32 (TLGP), 86 to 90 (DGTTT), glycine 413, 479 to 481 (NAA), and aspartate 495.

This sequence belongs to the chaperonin (HSP60) family. Forms a cylinder of 14 subunits composed of two heptameric rings stacked back-to-back. Interacts with the co-chaperonin GroES.

The protein resides in the plastid. Its subcellular location is the cyanelle. It catalyses the reaction ATP + H2O + a folded polypeptide = ADP + phosphate + an unfolded polypeptide.. Its function is as follows. Together with its co-chaperonin GroES, plays an essential role in assisting protein folding. The GroEL-GroES system forms a nano-cage that allows encapsulation of the non-native substrate proteins and provides a physical environment optimized to promote and accelerate protein folding. The chain is Chaperonin GroEL, cyanelle from Cyanophora paradoxa.